Reading from the N-terminus, the 127-residue chain is MAKEVIFTEKAPKPIGPYSQAIKVGNFIFVAGQIPIDPETGEIVKGDIKEQTKRVIENIKAILEEAGASLNDVVKVTVYLKDLNDFAKMNEVYSEYFGESKPARVAVEVSRLPKDVLIEMEAIAYKE.

Belongs to the RutC family.

In Pyrococcus abyssi (strain GE5 / Orsay), this protein is RutC family protein PYRAB12510.